Here is a 327-residue protein sequence, read N- to C-terminus: Lipid phosphate phosphatase 1 (327 aa).

Transmembrane regions (helical) follow at residues 51–71 (WIIL…SPFY), 93–113 (IWSV…CFYL), 118–138 (VYDL…TGVI), 187–207 (FPSG…LYLS), 217–237 (GHVA…LVGI), and 244–264 (WHHW…AAFC).

It belongs to the PA-phosphatase related phosphoesterase family. In terms of tissue distribution, strongly expressed in leaves, moderately in roots, weakly in floral hamps and flower buds, and not detected in adult flowers and seedpods.

Its subcellular location is the membrane. PA phosphatase activity inhibited by N-ethylmaleimide with an IC(50) value of 10 mM. Plays a general role in cellular responses to stress, may be by attenuating the signal produced by phospholipases. Exhibits both diacylglycerol pyrophosphate (DGPP) phosphatase and phosphatidate (PA) phosphatase activities. Substrate preference is diacylglycerol pyrophosphate &gt; phosphatidate. The chain is Lipid phosphate phosphatase 1 (LPP1) from Arabidopsis thaliana (Mouse-ear cress).